The chain runs to 157 residues: uncharacterized protein (157 aa).

The region spanning 6–157 is the HTH marR-type domain; sequence HDELFQAIQQ…AFFNLWIKYM (152 aa). The segment at residues 66–89 is a DNA-binding region (H-T-H motif); it reads NSFLASRLHISKAAVSKAVHALLK.

The protein resides in the cytoplasm. This is an uncharacterized protein from Bacillus subtilis (strain 168).